Here is a 36-residue protein sequence, read N- to C-terminus: Photosystem II reaction center protein M (36 aa).

A helical transmembrane segment spans residues Ile5 to Leu25.

It belongs to the PsbM family. In terms of assembly, PSII is composed of 1 copy each of membrane proteins PsbA, PsbB, PsbC, PsbD, PsbE, PsbF, PsbH, PsbI, PsbJ, PsbK, PsbL, PsbM, PsbT, PsbY, PsbZ, Psb30/Ycf12, at least 3 peripheral proteins of the oxygen-evolving complex and a large number of cofactors. It forms dimeric complexes.

The protein resides in the plastid. It localises to the chloroplast thylakoid membrane. In terms of biological role, one of the components of the core complex of photosystem II (PSII). PSII is a light-driven water:plastoquinone oxidoreductase that uses light energy to abstract electrons from H(2)O, generating O(2) and a proton gradient subsequently used for ATP formation. It consists of a core antenna complex that captures photons, and an electron transfer chain that converts photonic excitation into a charge separation. This subunit is found at the monomer-monomer interface. This is Photosystem II reaction center protein M from Bigelowiella natans (Pedinomonas minutissima).